The sequence spans 351 residues: Methionine import ATP-binding protein MetN (351 aa).

In terms of domain architecture, ABC transporter spans 4-249 (VQLDHVSVTF…PKAELTQKFV (246 aa)). 41–48 (GFSGAGKS) contributes to the ATP binding site.

This sequence belongs to the ABC transporter superfamily. Methionine importer (TC 3.A.1.24) family. As to quaternary structure, the complex is composed of two ATP-binding proteins (MetN), two transmembrane proteins (MetI) and a solute-binding protein (MetQ).

It localises to the cell membrane. The enzyme catalyses L-methionine(out) + ATP + H2O = L-methionine(in) + ADP + phosphate + H(+). The catalysed reaction is D-methionine(out) + ATP + H2O = D-methionine(in) + ADP + phosphate + H(+). Functionally, part of the ABC transporter complex MetNIQ involved in methionine import. Responsible for energy coupling to the transport system. This chain is Methionine import ATP-binding protein MetN, found in Lactobacillus delbrueckii subsp. bulgaricus (strain ATCC 11842 / DSM 20081 / BCRC 10696 / JCM 1002 / NBRC 13953 / NCIMB 11778 / NCTC 12712 / WDCM 00102 / Lb 14).